We begin with the raw amino-acid sequence, 342 residues long: MDEANQIAKDSVPRIDAYGFIRPVEFDYAVYEEFIARYRVVLTRRALKWSKLLQQSAAVEKSIKVKRYIRKGIPNEHRSHVWMVVSGAQAQMGMNTGYFRRMFIEGEKNPKLLDLVNTDLNRTFPDNVQFRKNSNPSLQKHLYNVLVAYGQHNTTVGYCQGMNFIAGYLILVTKDEEKAFWLMDALIGRILPDYYSPAMTGLKTDQEVLGDLVKKKLPAVSQLIEAHGVMWTLLVSRWFICLFIDILPVETVLRIWDCLFFEGSKVLFRVALTLIKQYQAFILEARNFPDICDKFKEITKGEFVTDCHYFMQKIFAEPGSLSKTTIDKLREKQRLQLASEEK.

The Rab-GAP TBC domain maps to 72 to 263 (GIPNEHRSHV…RIWDCLFFEG (192 aa)).

Functionally, may act as a GTPase-activating protein for Rab family protein(s). This Xenopus laevis (African clawed frog) protein is Growth hormone-regulated TBC protein 1 (grtp1).